Reading from the N-terminus, the 152-residue chain is 3-dehydroquinate dehydratase (152 aa).

Tyr-23 (proton acceptor) is an active-site residue. The substrate site is built by Asn-75, His-81, and Asp-88. The active-site Proton donor is the His-101. Substrate contacts are provided by residues 102 to 103 (IS) and Arg-112.

This sequence belongs to the type-II 3-dehydroquinase family. As to quaternary structure, homododecamer.

The enzyme catalyses 3-dehydroquinate = 3-dehydroshikimate + H2O. It participates in metabolic intermediate biosynthesis; chorismate biosynthesis; chorismate from D-erythrose 4-phosphate and phosphoenolpyruvate: step 3/7. Catalyzes a trans-dehydration via an enolate intermediate. The sequence is that of 3-dehydroquinate dehydratase from Alkalilimnicola ehrlichii (strain ATCC BAA-1101 / DSM 17681 / MLHE-1).